The sequence spans 156 residues: ATP synthase subunit b (156 aa).

The chain crosses the membrane as a helical span at residues 7–29 (LLGQAISFAMFVWFCMKYVWPPI).

Belongs to the ATPase B chain family. F-type ATPases have 2 components, F(1) - the catalytic core - and F(0) - the membrane proton channel. F(1) has five subunits: alpha(3), beta(3), gamma(1), delta(1), epsilon(1). F(0) has three main subunits: a(1), b(2) and c(10-14). The alpha and beta chains form an alternating ring which encloses part of the gamma chain. F(1) is attached to F(0) by a central stalk formed by the gamma and epsilon chains, while a peripheral stalk is formed by the delta and b chains.

It localises to the cell inner membrane. F(1)F(0) ATP synthase produces ATP from ADP in the presence of a proton or sodium gradient. F-type ATPases consist of two structural domains, F(1) containing the extramembraneous catalytic core and F(0) containing the membrane proton channel, linked together by a central stalk and a peripheral stalk. During catalysis, ATP synthesis in the catalytic domain of F(1) is coupled via a rotary mechanism of the central stalk subunits to proton translocation. Functionally, component of the F(0) channel, it forms part of the peripheral stalk, linking F(1) to F(0). The protein is ATP synthase subunit b of Vibrio vulnificus (strain CMCP6).